Reading from the N-terminus, the 276-residue chain is Glutamate racemase (276 aa).

Substrate is bound by residues 9 to 10 (DS) and 41 to 42 (YG). Cys72 (proton donor/acceptor) is an active-site residue. 73-74 (NT) serves as a coordination point for substrate. Cys183 functions as the Proton donor/acceptor in the catalytic mechanism. 184–185 (TH) lines the substrate pocket.

The protein belongs to the aspartate/glutamate racemases family.

The enzyme catalyses L-glutamate = D-glutamate. Its pathway is cell wall biogenesis; peptidoglycan biosynthesis. In terms of biological role, provides the (R)-glutamate required for cell wall biosynthesis. The sequence is that of Glutamate racemase from Shouchella clausii (strain KSM-K16) (Alkalihalobacillus clausii).